A 276-amino-acid polypeptide reads, in one-letter code: Secretagogin (276 aa).

EF-hand domains lie at 12-47 (LDAAGFWQVWQRFDVEEKGYIEEKELDAFFYHMLTK), 71-93 (DVSKDGCIQMKELAGMFLSEDEN), 105-140 (DSSVEFMRIWRKYDADSSGFISAAELCNFLRDLFLH), 149-184 (KLEEYTGTMMKIFDKNKDGRLDLNDLARILALQENF), 197-232 (ERKRDFEKIFAHYDVSKTGALEGPEVDGFVKDMMEL), and 240-276 (VDLDKFREILLRHCDVNKDGKIQKSELALCLGLKINP). Ca(2+) is bound by residues Asp71, Ser73, Asp75, Cys77, Glu82, Asp118, Asp120, Ser122, Glu129, Asp162, Asn164, Asp166, Arg168, Asp173, Asp210, Ser212, Thr214, Glu221, Asp254, Asn256, Asp258, Lys260, and Glu265.

The protein resides in the cytoplasm. Its subcellular location is the secreted. It is found in the cytoplasmic vesicle. It localises to the secretory vesicle membrane. The chain is Secretagogin (SCGN) from Bos taurus (Bovine).